Consider the following 374-residue polypeptide: Alpha-N-acetylgalactosaminide alpha-2,6-sialyltransferase 2 (374 aa).

The Cytoplasmic segment spans residues 1 to 7 (MGLPRGS). The helical; Signal-anchor for type II membrane protein transmembrane segment at 8–28 (FFWLLLLLTAACSGLLFALYF) threads the bilayer. The Lumenal segment spans residues 29–374 (SAVQRYPGPA…KAGILQLYQR (346 aa)). 2 disulfides stabilise this stretch: C66/C148 and C151/C317. 2 N-linked (GlcNAc...) asparagine glycosylation sites follow: N85 and N130. A CMP-N-acetyl-beta-neuraminate-binding site is contributed by N156. N161 carries N-linked (GlcNAc...) asparagine glycosylation. 3 residues coordinate CMP-N-acetyl-beta-neuraminate: N179, S304, and H336.

This sequence belongs to the glycosyltransferase 29 family. Expressed in skeletal muscle, heart, kidney, placenta, lung and leukocytes.

It is found in the golgi apparatus membrane. It carries out the reaction a beta-D-galactosyl-(1-&gt;3)-N-acetyl-alpha-D-galactosaminyl derivative + CMP-N-acetyl-beta-neuraminate = a beta-D-galactosyl-(1-&gt;3)-[N-acetyl-alpha-neuraminyl-(2-&gt;6)]-N-acetyl-alpha-D-galactosaminyl derivative + CMP + H(+). The catalysed reaction is a 3-O-[N-acetyl-alpha-D-galactosaminyl]-L-threonyl-[protein] + CMP-N-acetyl-beta-neuraminate = a 3-O-[N-acetyl-alpha-neuraminosyl-(2-&gt;6)-N-acetyl-alpha-D-galactosaminyl]-L-threonyl-[protein] + CMP + H(+). The enzyme catalyses a 3-O-[N-acetyl-alpha-neuraminyl-(2-&gt;3)-beta-D-galactosyl-(1-&gt;3)-N-acetyl-alpha-D-galactosaminyl]-L-threonyl-[protein] + CMP-N-acetyl-beta-neuraminate = a 3-O-{alpha-Neu5Ac-(2-&gt;3)-beta-D-Gal-(1-&gt;3)-[alpha-Neu5Ac-(2-&gt;6)]-alpha-D-GalNAc}-L-threonyl-[protein] + CMP + H(+). It functions in the pathway protein modification; protein glycosylation. Its function is as follows. Catalyzes the transfer of N-acetylneuraminyl groups onto glycan chains in glycoproteins. Conjugates sialic acid with an alpha-2-6 linkage to N-acetylgalactosamine (GalNAc) glycan chains linked to serine or threonine in glycoproteins. Sialylates alphaGalNAc- and Galbeta1-&gt;3GalNAc-O-Ser/Thr epitopes also known as Tn and T antigens. This is Alpha-N-acetylgalactosaminide alpha-2,6-sialyltransferase 2 (ST6GALNAC2) from Homo sapiens (Human).